The chain runs to 64 residues: MSSKGGSSGGMWSVFIHGHDGSNKGSKTYTSSGSGMWGGGSSSGVKSGVNGGVNGGVKSGTGKI.

A disordered region spans residues 1–64 (MSSKGGSSGG…GGVKSGTGKI (64 aa)). Residues 23–34 (NKGSKTYTSSGS) are compositionally biased toward low complexity. A compositionally biased stretch (gly residues) spans 49-64 (VNGGVNGGVKSGTGKI).

Belongs to the orthopoxvirus OPG024 family.

The protein is OPG024 protein (OPG023) of Cynomys gunnisoni (Gunnison's prairie dog).